Consider the following 141-residue polypeptide: Brain ribonuclease (141 aa).

The tract at residues 1–25 (KETAAAKFRRQHMDSGSSSSSNSNY) is disordered. Substrate contacts are provided by Lys7 and Arg10. His12 serves as the catalytic Proton acceptor. Residues 15–24 (SGSSSSSNSN) show a composition bias toward low complexity. 4 cysteine pairs are disulfide-bonded: Cys26/Cys84, Cys40/Cys95, Cys58/Cys110, and Cys65/Cys72. Substrate is bound at residue 41-45 (KPVNT). Residue Asn62 is glycosylated (N-linked (GlcNAc...) asparagine). Positions 66 and 85 each coordinate substrate. His119 functions as the Proton donor in the catalytic mechanism. Thr129 carries an O-linked (GalNAc...) threonine glycan.

Belongs to the pancreatic ribonuclease family.

Its subcellular location is the secreted. The sequence is that of Brain ribonuclease (BRN) from Giraffa camelopardalis (Giraffe).